Here is a 96-residue protein sequence, read N- to C-terminus: Large ribosomal subunit protein bL28 (96 aa).

It belongs to the bacterial ribosomal protein bL28 family.

This is Large ribosomal subunit protein bL28 from Orientia tsutsugamushi (strain Boryong) (Rickettsia tsutsugamushi).